The primary structure comprises 449 residues: VIRF-1 (449 aa).

The interval 1 to 60 (MDPGQRPNPFGAPGAIPKKPCLSQGSPGTSGSGAPCDEPSRSESPGEGPSGTGGSAAAGD) is disordered. The IRF tryptophan pentad repeat DNA-binding region spans 89–195 (KASIKDWIVC…HHFLVFRVRK (107 aa)). N6-propionyllysine; by host is present on residues lysine 406 and lysine 442.

It belongs to the IRF family. In terms of assembly, forms homodimers. Interacts with host IRF3, IRF7, and CREBBP. Interacts with host SYNCRIP. Interacts with host USP7. Interacts (via C-terminus) with host HERC5. Interacts with host GABARAPL1. Interacts with host SIRT6. ISGylated. Post-translationally, propionylated in lysine residues Lys-406 and Lys-442, which is required for effective inhibition of IFN-beta production and antiviral signaling.

The protein resides in the host cytoplasm. Plays a role in the inhibition of host innate response by repressing the expression of interferon-inducible genes and blocking host IRF1- and IRF3-mediated transcription. Blocks the interaction between host IRF3 and CREBBP. Regulates the host cellular metabolism by increasing glucose uptake, ATP production and lactate secretion through down-regulation of heterogeneous nuclear ribonuclear protein Q1/SYNCRIP. Mechanistically, induces ubiquitination and degradation of SYNCRIP through the ubiquitin-proteasome pathway by recruiting KLHL3/CUL3 ubiquitin ligase complex. Disrupts host TP53 signaling pathway during viral infection by interacting with host USP7 and thereby decreasing the availability of USP7 for deubiquitinating and stabilizing TP53. Plays a role in the global inhibition of protein ISGylation by interacting with host HERC5 leading to its inhibition. Promotes its own propionylation by blocking SIRT6 interaction with ubiquitin-specific peptidase 10/USP10 leading to SIRT6 degradation via a ubiquitin-proteasome pathway. In turn, propionylation is required to block IRF3-CBP/p300 recruitment and to repress the STING DNA sensing pathway. Plays a role in the activation of mitophagy during infection via interaction with the host proteins NIX/BNIP3L, TUFM and GABARAPL1 thereby inhibiting antiviral responses and contributing to productive replication. This Homo sapiens (Human) protein is VIRF-1 (vIRF-1).